The chain runs to 172 residues: Myosin regulatory light polypeptide 9 (172 aa).

Basic residues predominate over residues Met-1–Gln-16. The tract at residues Met-1 to Ser-20 is disordered. Ser-2 is subject to N-acetylserine. A Phosphothreonine; by MLCK, CIT and ROCK2 modification is found at Thr-19. Ser-20 bears the Phosphoserine; by CDC42BP, CIT, MLCK, PAK1, ROCK1, ROCK2, DAPK1, DAPK2 and ZIPK/DAPK3 mark. 3 EF-hand domains span residues Ser-29–Asn-64, Asp-98–Arg-133, and Phe-134–Asp-169. Ca(2+) contacts are provided by Asp-42, Asn-44, Asp-46, and Asp-53.

As to quaternary structure, myosin is a hexamer of 2 heavy chains and 4 light chains: interacts with myosin heavy chain MYO19. Interacts with LUZP1; the interaction results in inhibition of phosphorylation of MYL9 by DAPK3. Phosphorylation increases the actin-activated myosin ATPase activity and thereby regulates the contractile activity. It is required to generate the driving force in the migration of the cells but not necessary for localization of myosin-2 at the leading edge. Phosphorylation is required for myotube formation. Phosphorylated by DAPK3; DAPK3-mediated phosphorylation is inhibited by LUZP1.

It localises to the cytoplasm. Its subcellular location is the cytoskeleton. The protein localises to the cell cortex. Its function is as follows. Myosin regulatory subunit that plays an important role in regulation of both smooth muscle and nonmuscle cell contractile activity via its phosphorylation. Implicated in cytokinesis, receptor capping, and cell locomotion. In myoblasts, regulates PIEZO1-dependent cortical actomyosin assembly involved in myotube formation. This chain is Myosin regulatory light polypeptide 9 (Myl9), found in Mus musculus (Mouse).